Reading from the N-terminus, the 389-residue chain is tRNA-specific 2-thiouridylase MnmA (389 aa).

ATP contacts are provided by residues 33–40 and Leu59; that span reads GLSGGVDS. Cys120 functions as the Nucleophile in the catalytic mechanism. Residues Cys120 and Cys219 are joined by a disulfide bond. Gly145 is an ATP binding site. An interaction with tRNA region spans residues 169 to 171; the sequence is KDQ. Cys219 acts as the Cysteine persulfide intermediate in catalysis. An interaction with tRNA region spans residues 326-327; the sequence is RY.

This sequence belongs to the MnmA/TRMU family.

It localises to the cytoplasm. It carries out the reaction S-sulfanyl-L-cysteinyl-[protein] + uridine(34) in tRNA + AH2 + ATP = 2-thiouridine(34) in tRNA + L-cysteinyl-[protein] + A + AMP + diphosphate + H(+). Its function is as follows. Catalyzes the 2-thiolation of uridine at the wobble position (U34) of tRNA, leading to the formation of s(2)U34. This Synechococcus sp. (strain WH7803) protein is tRNA-specific 2-thiouridylase MnmA.